A 59-amino-acid chain; its full sequence is Large ribosomal subunit protein bL32 (59 aa).

Residues 1-22 (MAVPKKKTSNSKRDSRRAHWNR) show a composition bias toward basic residues. Residues 1 to 59 (MAVPKKKTSNSKRDSRRAHWNRKANLAAQRALSTGKSILTGRAKGFEYPTKDDDEDDDE) form a disordered region.

Belongs to the bacterial ribosomal protein bL32 family.

This is Large ribosomal subunit protein bL32 from Acaryochloris marina (strain MBIC 11017).